A 226-amino-acid polypeptide reads, in one-letter code: PDGF-related-transforming protein sis (226 aa).

Positions 201 to 215 are enriched in basic residues; the sequence is RRPPKGKHRKCKHTH. A disordered region spans residues 201-226; sequence RRPPKGKHRKCKHTHDKTALKETLGA.

It belongs to the PDGF/VEGF growth factor family.

The protein is PDGF-related-transforming protein sis (V-SIS) of Woolly monkey sarcoma virus (WMSV).